The chain runs to 168 residues: Shikimate kinase (168 aa).

10-15 (CSGKST) is an ATP binding site. Mg(2+) is bound at residue Ser-14. 3 residues coordinate substrate: Asp-32, Arg-56, and Gly-78. Arg-116 is a binding site for ATP. Arg-133 serves as a coordination point for substrate.

Belongs to the shikimate kinase family. Monomer. Mg(2+) serves as cofactor.

Its subcellular location is the cytoplasm. The catalysed reaction is shikimate + ATP = 3-phosphoshikimate + ADP + H(+). Its pathway is metabolic intermediate biosynthesis; chorismate biosynthesis; chorismate from D-erythrose 4-phosphate and phosphoenolpyruvate: step 5/7. Its function is as follows. Catalyzes the specific phosphorylation of the 3-hydroxyl group of shikimic acid using ATP as a cosubstrate. The chain is Shikimate kinase from Aquifex aeolicus (strain VF5).